The sequence spans 227 residues: Thymidine kinase 1 (227 aa).

ATP contacts are provided by residues 15–22 (GPMFSGKT), 47–49 (DTR), and 91–94 (DEGQ). Glu-92 acts as the Proton acceptor in catalysis. Phe-122 is a substrate binding site. Zn(2+)-binding residues include Cys-147 and Cys-150. Substrate-binding positions include 166–170 (IELIG) and Tyr-175. Residues Cys-179 and Cys-182 each contribute to the Zn(2+) site. Positions 187 to 196 (QNEGNSTKPS) are enriched in polar residues. The tract at residues 187 to 227 (QNEGNSTKPSKTARHSHSQSAPSVAPLAVNINPDDHLNNDY) is disordered.

This sequence belongs to the thymidine kinase family. As to quaternary structure, interacts with calmodulin in the presence of Ca(2+).

The catalysed reaction is thymidine + ATP = dTMP + ADP + H(+). In Dictyostelium discoideum (Social amoeba), this protein is Thymidine kinase 1.